Reading from the N-terminus, the 37-residue chain is Cytochrome b6-f complex subunit 5 (37 aa).

The helical transmembrane segment at 5–25 threads the bilayer; the sequence is LLCGIVLGLIPVTLAGLFFAA.

It belongs to the PetG family. The 4 large subunits of the cytochrome b6-f complex are cytochrome b6, subunit IV (17 kDa polypeptide, PetD), cytochrome f and the Rieske protein, while the 4 small subunits are PetG, PetL, PetM and PetN. The complex functions as a dimer.

It is found in the cellular thylakoid membrane. In terms of biological role, component of the cytochrome b6-f complex, which mediates electron transfer between photosystem II (PSII) and photosystem I (PSI), cyclic electron flow around PSI, and state transitions. PetG is required for either the stability or assembly of the cytochrome b6-f complex. This Thermosynechococcus vestitus (strain NIES-2133 / IAM M-273 / BP-1) protein is Cytochrome b6-f complex subunit 5.